A 639-amino-acid polypeptide reads, in one-letter code: Tetracycline resistance protein TetM from transposon Tn916 (639 aa).

Residues 1 to 242 (MKIINIGVLA…VITNKFYSST (242 aa)) enclose the tr-type G domain. GTP-binding positions include 10–17 (AHVDAGKT), 74–78 (DTPGH), and 128–131 (NKID).

It belongs to the TRAFAC class translation factor GTPase superfamily. Classic translation factor GTPase family. TetM/TetO subfamily.

In terms of biological role, abolishes the inhibitory effect of tetracyclin on protein synthesis by a non-covalent modification of the ribosomes. In Enterococcus faecalis (Streptococcus faecalis), this protein is Tetracycline resistance protein TetM from transposon Tn916 (tetM).